A 61-amino-acid chain; its full sequence is Protein CopA/IncA (61 aa).

In terms of biological role, controls the copy number in gene replication. This chain is Protein CopA/IncA (copA), found in Escherichia coli.